A 172-amino-acid polypeptide reads, in one-letter code: Signal peptidase complex catalytic subunit SEC11 (172 aa).

At 1–14 (MLSSLGNPRQAATQ) the chain is on the cytoplasmic side. A helical; Signal-anchor for type II membrane protein transmembrane segment spans residues 15 to 35 (LLNFALILSTAFMMWKGLSVA). At 36–172 (TDSPSPIVVV…MGLMVVLQRE (137 aa)) the chain is on the lumenal side. Active-site charge relay system residues include serine 49, histidine 90, and aspartate 115. The segment at 158–169 (AMLGIMGLMVVL) is C-terminal short (CTS) helix.

It belongs to the peptidase S26B family. Component of the signal peptidase complex (SPC) composed of a catalytic subunit SEC11 and three accessory subunits SPC1, SPC2 and SPC3. The complex induces a local thinning of the ER membrane which is used to measure the length of the signal peptide (SP) h-region of protein substrates. This ensures the selectivity of the complex towards h-regions shorter than 18-20 amino acids. SPC associates with the translocon complex.

Its subcellular location is the endoplasmic reticulum membrane. The enzyme catalyses Cleavage of hydrophobic, N-terminal signal or leader sequences from secreted and periplasmic proteins.. Functionally, catalytic component of the signal peptidase complex (SPC) which catalyzes the cleavage of N-terminal signal sequences from nascent proteins as they are translocated into the lumen of the endoplasmic reticulum. Specifically cleaves N-terminal signal peptides that contain a hydrophobic alpha-helix (h-region) shorter than 18-20 amino acids. The protein is Signal peptidase complex catalytic subunit SEC11 (SEC11) of Pyricularia oryzae (strain 70-15 / ATCC MYA-4617 / FGSC 8958) (Rice blast fungus).